Consider the following 404-residue polypeptide: Intracellular hyaluronan-binding protein 4.L (404 aa).

3 disordered regions span residues 1–21, 51–288, and 359–379; these read MRLD…MQDN, LTRR…QEMS, and LTRP…REEA. The span at 8 to 19 shows a compositional bias: polar residues; that stretch reads ETPSSPVNTEMQ. Composition is skewed to basic and acidic residues over residues 71–81, 145–159, and 165–184; these read GKKESQKDRKA, KVDR…REVR, and RSNE…DKQM. Residues 188–200 show a composition bias toward gly residues; sequence GGRGGMRGRGRGG. 2 stretches are compositionally biased toward basic and acidic residues: residues 205–233 and 270–281; these read TEND…DKRG and EEHAKVPEEKNE.

It belongs to the SERBP1-HABP4 family. In terms of assembly, associates with ribosomes; promoting ribosome stabilization. Interacts with eef2/eEF2; promoting ribosome stabilization.

The protein localises to the nucleus. The protein resides in the cytoplasm. It localises to the stress granule. Its subcellular location is the nucleolus. It is found in the nucleus speckle. The protein localises to the cajal body. Its function is as follows. Ribosome-binding protein that promotes ribosome hibernation, a process during which ribosomes are stabilized in an inactive state and preserved from proteasomal degradation. Acts via its association with eef2/eEF2 factor at the A-site of the ribosome, promoting ribosome stabilization in an inactive state compatible with storage. Plays a key role in ribosome hibernation in the mature egg by promoting ribosome stabilization. Ribosomes, which are produced in large quantities during oogenesis, are stored and translationally repressed in the egg and early embryo. This Xenopus laevis (African clawed frog) protein is Intracellular hyaluronan-binding protein 4.L.